We begin with the raw amino-acid sequence, 310 residues long: tRNA dimethylallyltransferase (310 aa).

14–21 (GPTASGKS) is an ATP binding site. 16 to 21 (TASGKS) lines the substrate pocket. Interaction with substrate tRNA stretches follow at residues 39–42 (DSMQ) and 163–167 (QRIVR).

It belongs to the IPP transferase family. In terms of assembly, monomer. It depends on Mg(2+) as a cofactor.

The catalysed reaction is adenosine(37) in tRNA + dimethylallyl diphosphate = N(6)-dimethylallyladenosine(37) in tRNA + diphosphate. Functionally, catalyzes the transfer of a dimethylallyl group onto the adenine at position 37 in tRNAs that read codons beginning with uridine, leading to the formation of N6-(dimethylallyl)adenosine (i(6)A). This Brucella abortus (strain S19) protein is tRNA dimethylallyltransferase.